Here is a 100-residue protein sequence, read N- to C-terminus: MFAVIETGGKQYLVKKGSIIKVERLQAEEKEEVEINKVICVSNNGLSCSSNAVVKAEVLEQCRDKKIIIFKKKRRKNYRRKNGHRQYITVLRINEISLQK.

It belongs to the bacterial ribosomal protein bL21 family. In terms of assembly, part of the 50S ribosomal subunit. Contacts protein L20.

In terms of biological role, this protein binds to 23S rRNA in the presence of protein L20. This is Large ribosomal subunit protein bL21 from Wolbachia pipientis subsp. Culex pipiens (strain wPip).